The chain runs to 957 residues: Glutamyl aminopeptidase (957 aa).

Over 1 to 18 the chain is Cytoplasmic; that stretch reads MNFAEREGSKRYCIQTKH. A helical; Signal-anchor for type II membrane protein membrane pass occupies residues 19 to 39; that stretch reads VAILCAVVVGVGLIVGLAVGL. Topologically, residues 40 to 957 are extracellular; that stretch reads TRSCDSSGDG…EWFFNLLESG (918 aa). The disordered stretch occupies residues 44–83; it reads DSSGDGGPGTAPAPSHLPSSTASPSGPPAQDQDICPASED. N-linked (GlcNAc...) asparagine; atypical glycosylation is present at asparagine 98. Asparagine 124 and asparagine 197 each carry an N-linked (GlcNAc...) asparagine glycan. Position 223 (glutamate 223) interacts with substrate. N-linked (GlcNAc...) asparagine glycans are attached at residues asparagine 324 and asparagine 340. A substrate-binding site is contributed by 357–361; sequence GAMEN. Histidine 393 lines the Zn(2+) pocket. Catalysis depends on glutamate 394, which acts as the Proton acceptor. Zn(2+)-binding residues include histidine 397 and glutamate 416. Asparagine 554, asparagine 589, asparagine 597, asparagine 607, asparagine 678, asparagine 763, asparagine 773, asparagine 801, and asparagine 828 each carry an N-linked (GlcNAc...) asparagine glycan. Residue arginine 887 coordinates substrate.

Belongs to the peptidase M1 family. Homodimer; disulfide-linked. The cofactor is Zn(2+). In terms of tissue distribution, expressed in choriocarcinoma cancer cell lines (at protein level). Expressed by epithelial cells of the proximal tubule cells and the glomerulus of the nephron. Also found in a variety of other tissues.

It localises to the cell membrane. The enzyme catalyses Release of N-terminal glutamate (and to a lesser extent aspartate) from a peptide.. Its activity is regulated as follows. Substrate specificity is modulated by calcium which enhances the enzymatic activity for cleavage of acidic residues while reducing its activity with basic residues. Inhibited by aminopeptidase inhibitors amastatin and bestatin. Its function is as follows. Regulates central hypertension through its calcium-modulated preference to cleave N-terminal acidic residues from peptides such as angiotensin II. In Homo sapiens (Human), this protein is Glutamyl aminopeptidase (ENPEP).